The primary structure comprises 867 residues: Xylosyltransferase 2 (867 aa).

Topologically, residues 1 to 15 are cytoplasmic; the sequence is MVASARVQKLVRRYK. Residues 16–36 traverse the membrane as a helical; Signal-anchor for type II membrane protein segment; it reads LAIATALAILLLQGLVVWSFS. Residues 37–867 lie on the Lumenal side of the membrane; it reads VLEDDEPGEK…GPVKADGRLR (831 aa). A disordered region spans residues 41–122; sequence DEPGEKGRQK…PPPEAPGRQN (82 aa). Residues 53-65 are compositionally biased toward basic and acidic residues; that stretch reads RPLDPSEGSKDTD. Residues 73–82 are compositionally biased toward basic residues; that stretch reads SAGRRHGRWR. N122 carries an N-linked (GlcNAc...) asparagine glycan. 2 disulfides stabilise this stretch: C161-C189 and C205-C447. UDP-alpha-D-xylose-binding positions include V238, D266, and 295 to 297; that span reads TIW. A glycan (N-linked (GlcNAc...) asparagine) is linked at N326. UDP-alpha-D-xylose contacts are provided by residues 399–400, S480, and 503–504; these read DW and RK. 2 disulfides stabilise this stretch: C580/C835 and C828/C841. N685 carries N-linked (GlcNAc...) asparagine glycosylation.

Belongs to the glycosyltransferase 14 family. XylT subfamily. In terms of assembly, monomer. Mg(2+) is required as a cofactor. The cofactor is Mn(2+). Contains disulfide bonds.

Its subcellular location is the golgi apparatus membrane. It is found in the secreted. It catalyses the reaction UDP-alpha-D-xylose + L-seryl-[protein] = 3-O-(beta-D-xylosyl)-L-seryl-[protein] + UDP + H(+). The protein operates within glycan metabolism; chondroitin sulfate biosynthesis. It participates in glycan metabolism; heparan sulfate biosynthesis. Functionally, catalyzes the first step in the biosynthesis of chondroitin sulfate, heparan sulfate and dermatan sulfate proteoglycans, such as DCN. Transfers D-xylose from UDP-D-xylose to specific serine residues of the core protein. In Bos taurus (Bovine), this protein is Xylosyltransferase 2 (XYLT2).